The following is a 158-amino-acid chain: Nascent polypeptide-associated complex subunit beta (158 aa).

Disordered stretches follow at residues Met-1–Leu-40 and Glu-119–Glu-158. Positions Gly-16–Lys-31 are enriched in basic residues. Residues Gly-34–Val-99 form the NAC-A/B domain. The segment covering Asp-137–Asn-152 has biased composition (acidic residues).

Belongs to the NAC-beta family. In terms of assembly, part of the nascent polypeptide-associated complex (NAC), consisting of EGD2 and EGD1. NAC associates with ribosomes via EGD1.

It is found in the cytoplasm. It localises to the nucleus. Functionally, component of the nascent polypeptide-associated complex (NAC), a dynamic component of the ribosomal exit tunnel, protecting the emerging polypeptides from interaction with other cytoplasmic proteins to ensure appropriate nascent protein targeting. The NAC complex also promotes mitochondrial protein import by enhancing productive ribosome interactions with the outer mitochondrial membrane and blocks the inappropriate interaction of ribosomes translating non-secretory nascent polypeptides with translocation sites in the membrane of the endoplasmic reticulum. EGD1 may act as a transcription factor that exert a negative effect on the expression of several genes that are transcribed by RNA polymerase II. The protein is Nascent polypeptide-associated complex subunit beta (EGD1) of Ajellomyces capsulatus (strain NAm1 / WU24) (Darling's disease fungus).